Reading from the N-terminus, the 1067-residue chain is Probable importin subunit beta-4 (1067 aa).

The region spanning 27–94 is the Importin N-terminal domain; the sequence is ATRALETKYL…RSNLLDITLK (68 aa). HEAT repeat units lie at residues 159 to 196, 379 to 416, 420 to 457, 591 to 633, 890 to 927, and 1013 to 1050; these read KLLL…VLES, GNLP…EIPT, KHHA…GLDK, PFLE…SVET, PFTR…FSTE, and QHLG…EIAP.

This sequence belongs to the importin beta family.

The protein localises to the cytoplasm. The protein resides in the nucleus. It is found in the nucleus envelope. In terms of biological role, required for nuclear protein import, its predominant substrate seems to be ribosomal proteins. Binds to nucleoporins and the GTP-bound form of gsp1 (Ran). The protein is Probable importin subunit beta-4 (kap123) of Schizosaccharomyces pombe (strain 972 / ATCC 24843) (Fission yeast).